Reading from the N-terminus, the 393-residue chain is MKKLLKSVLVFAALSSASSLQALPVGNPAEPSLMIDGILWEGFGGDPCDPCTTWCDAISMRMGYYGDFVFDRVLKTDVNKEFQMGDKPTSTTGNATAPTTLTARENPAYGRHMQDAEMFTNAACMALNIWDRFDVFCTLGASSGYLKGNSASFNLVGLFGDNENQSTVKTNSVPNMSLDQSVVELYTDTAFSWSVGARAALWECGCATLGASFQYAQSKPKVEELNVLCNAAEFTINKPKGYVGQEFPLALIAGTDAATGTKDASIDYHEWQASLALSYRLNMFTPYIGVKWSRASFDADTIRIAQPKSATAIFDTTTLNPTIAGAGDVKASAEGQLGDTMQIVSLQLNKMKSRKSCGIAVGTTIVDADKYAVTVETRLIDERAAHVNAQFRF.

The first 22 residues, 1–22, serve as a signal peptide directing secretion; sequence MKKLLKSVLVFAALSSASSLQA.

This sequence belongs to the chlamydial porin (CP) (TC 1.B.2) family. As to quaternary structure, part of a disulfide cross-linked outer membrane complex (COMC) composed of the major outer membrane porin (MOMP), the small cysteine-rich protein (OmcA) and the large cysteine-rich periplasmic protein (OmcB).

Its subcellular location is the cell outer membrane. In terms of biological role, in elementary bodies (EBs, the infectious stage, which is able to survive outside the host cell) provides the structural integrity of the outer envelope through disulfide cross-links with the small cysteine-rich protein and the large cysteine-rich periplasmic protein. It has been described in publications as the Sarkosyl-insoluble COMC (Chlamydia outer membrane complex), and serves as the functional equivalent of peptidoglycan. Functionally, permits diffusion of specific solutes through the outer membrane. In Chlamydia trachomatis, this protein is Major outer membrane porin, serovar E (ompA).